The primary structure comprises 490 residues: Chromosomal replication initiator protein DnaA (490 aa).

The tract at residues 1–91 is domain I, interacts with DnaA modulators; sequence MTMKGGVASQ…GELWAAHDAT (91 aa). Residues 91-147 are domain II; the sequence is TGRRIDLKSRLEFEAAAGAYVEATPKAVAAEPIEIVLPVSTDAPTVVAPSAKSPRTQ. The domain III, AAA+ region stretch occupies residues 148 to 370; it reads GLQERFTFET…GALNTLSARA (223 aa). ATP-binding residues include glycine 192, glycine 194, lysine 195, and threonine 196. Residues 371–490 form a domain IV, binds dsDNA region; it reads GEGLSRMTLD…LETLTRKLRG (120 aa).

It belongs to the DnaA family. Oligomerizes as a right-handed, spiral filament on DNA at oriC.

The protein resides in the cytoplasm. Its function is as follows. Plays an essential role in the initiation and regulation of chromosomal replication. ATP-DnaA binds to the origin of replication (oriC) to initiate formation of the DNA replication initiation complex once per cell cycle. Binds the DnaA box (a 9 base pair repeat at the origin) and separates the double-stranded (ds)DNA. Forms a right-handed helical filament on oriC DNA; dsDNA binds to the exterior of the filament while single-stranded (ss)DNA is stabiized in the filament's interior. The ATP-DnaA-oriC complex binds and stabilizes one strand of the AT-rich DNA unwinding element (DUE), permitting loading of DNA polymerase. After initiation quickly degrades to an ADP-DnaA complex that is not apt for DNA replication. Binds acidic phospholipids. The protein is Chromosomal replication initiator protein DnaA of Caulobacter vibrioides (strain ATCC 19089 / CIP 103742 / CB 15) (Caulobacter crescentus).